A 196-amino-acid polypeptide reads, in one-letter code: dITP/XTP pyrophosphatase (196 aa).

Position 9–14 (9–14 (TSNAGK)) interacts with substrate. The Mg(2+) site is built by E39 and D68. D68 (proton acceptor) is an active-site residue. Substrate is bound by residues S69, 147 to 150 (FGYD), K170, and 175 to 176 (HR).

The protein belongs to the HAM1 NTPase family. In terms of assembly, homodimer. Mg(2+) is required as a cofactor.

The catalysed reaction is XTP + H2O = XMP + diphosphate + H(+). It carries out the reaction dITP + H2O = dIMP + diphosphate + H(+). The enzyme catalyses ITP + H2O = IMP + diphosphate + H(+). Functionally, pyrophosphatase that catalyzes the hydrolysis of nucleoside triphosphates to their monophosphate derivatives, with a high preference for the non-canonical purine nucleotides XTP (xanthosine triphosphate), dITP (deoxyinosine triphosphate) and ITP. Seems to function as a house-cleaning enzyme that removes non-canonical purine nucleotides from the nucleotide pool, thus preventing their incorporation into DNA/RNA and avoiding chromosomal lesions. This chain is dITP/XTP pyrophosphatase, found in Nostoc sp. (strain PCC 7120 / SAG 25.82 / UTEX 2576).